The chain runs to 476 residues: WASH complex subunit 1 (476 aa).

The required for WASH complex assembly stretch occupies residues 1 to 54 (MTTVAQKHFLEGQTYSVPLIQPDLRREEAVQQVADALQYLQKVSGDIFNRISQR). Disordered regions lie at residues 273–412 (SAPS…QGGD) and 427–476 (GISG…DWES). Residues 284 to 296 (TFSTESVEPSQAD) are compositionally biased toward polar residues. Pro residues predominate over residues 302-333 (LLPPPPPPPPPPPPVMPTTVPPPPPLPQPTAP). Residues 354-476 (QGAPKEVVNP…GEEDEDDWES (123 aa)) form a VCA region. The WH2 domain maps to 366–388 (GRASLLESIRQAGGIGKANLRSV). The span at 387–403 (SVKERKLEKKKQKEQEQ) shows a compositional bias: basic and acidic residues. Over residues 467–476 (GEEDEDDWES) the composition is skewed to acidic residues.

It belongs to the WASH1 family. Component of the WASH complex.

Its subcellular location is the early endosome membrane. It localises to the recycling endosome membrane. Its function is as follows. Acts as a nucleation-promoting factor at the surface of endosomes, where it recruits and activates the Arp2/3 complex to induce actin polymerization, playing a key role in the fission of tubules that serve as transport intermediates during endosome sorting. The sequence is that of WASH complex subunit 1 from Gallus gallus (Chicken).